The sequence spans 199 residues: ATP-dependent Clp protease proteolytic subunit (199 aa).

The active-site Nucleophile is Ser-99. The active site involves His-124.

This sequence belongs to the peptidase S14 family. As to quaternary structure, fourteen ClpP subunits assemble into 2 heptameric rings which stack back to back to give a disk-like structure with a central cavity, resembling the structure of eukaryotic proteasomes.

Its subcellular location is the cytoplasm. It catalyses the reaction Hydrolysis of proteins to small peptides in the presence of ATP and magnesium. alpha-casein is the usual test substrate. In the absence of ATP, only oligopeptides shorter than five residues are hydrolyzed (such as succinyl-Leu-Tyr-|-NHMec, and Leu-Tyr-Leu-|-Tyr-Trp, in which cleavage of the -Tyr-|-Leu- and -Tyr-|-Trp bonds also occurs).. Cleaves peptides in various proteins in a process that requires ATP hydrolysis. Has a chymotrypsin-like activity. Plays a major role in the degradation of misfolded proteins. The polypeptide is ATP-dependent Clp protease proteolytic subunit (Lactococcus lactis subsp. lactis (strain IL1403) (Streptococcus lactis)).